A 338-amino-acid polypeptide reads, in one-letter code: POU domain, class 4, transcription factor 3 (338 aa).

The POU-IV box signature appears at 56–65 (RAEALAAVDI). Positions 179-256 (DVESDPRELE…VLQAWLEEAE (78 aa)) constitute a POU-specific domain. Residues 274 to 333 (RKRKRTSIAAPEKRSLEAYFAIQPRPSSEKIAAIAEKLDLKKNVVRVWFCNQRQKQKRMK) constitute a DNA-binding region (homeobox).

This sequence belongs to the POU transcription factor family. Class-4 subfamily. In terms of assembly, interacts with ISL1. As to expression, brain. Seems to be specific to the retina.

The protein localises to the nucleus. It localises to the cytoplasm. Functionally, acts as a transcriptional activator. Acts by binding to sequences related to the consensus octamer motif 5'-ATGCAAAT-3' in the regulatory regions of its target genes. Involved in the auditory system development, required for terminal differentiation of hair cells in the inner ear. The sequence is that of POU domain, class 4, transcription factor 3 (POU4F3) from Homo sapiens (Human).